We begin with the raw amino-acid sequence, 132 residues long: Large ribosomal subunit protein uL14 (132 aa).

The protein belongs to the universal ribosomal protein uL14 family. As to quaternary structure, part of the 50S ribosomal subunit. Forms a cluster with proteins L3 and L24e, part of which may contact the 16S rRNA in 2 intersubunit bridges.

Functionally, binds to 23S rRNA. Forms part of two intersubunit bridges in the 70S ribosome. This chain is Large ribosomal subunit protein uL14, found in Methanocorpusculum labreanum (strain ATCC 43576 / DSM 4855 / Z).